A 386-amino-acid polypeptide reads, in one-letter code: Lipid-A-disaccharide synthase (386 aa).

It belongs to the LpxB family.

It carries out the reaction a lipid X + a UDP-2-N,3-O-bis[(3R)-3-hydroxyacyl]-alpha-D-glucosamine = a lipid A disaccharide + UDP + H(+). Its pathway is bacterial outer membrane biogenesis; LPS lipid A biosynthesis. In terms of biological role, condensation of UDP-2,3-diacylglucosamine and 2,3-diacylglucosamine-1-phosphate to form lipid A disaccharide, a precursor of lipid A, a phosphorylated glycolipid that anchors the lipopolysaccharide to the outer membrane of the cell. In Chromobacterium violaceum (strain ATCC 12472 / DSM 30191 / JCM 1249 / CCUG 213 / NBRC 12614 / NCIMB 9131 / NCTC 9757 / MK), this protein is Lipid-A-disaccharide synthase.